The following is a 342-amino-acid chain: Tetraacyldisaccharide 4'-kinase (342 aa).

68-75 (TVGGTGKT) contacts ATP.

It belongs to the LpxK family.

The catalysed reaction is a lipid A disaccharide + ATP = a lipid IVA + ADP + H(+). It participates in glycolipid biosynthesis; lipid IV(A) biosynthesis; lipid IV(A) from (3R)-3-hydroxytetradecanoyl-[acyl-carrier-protein] and UDP-N-acetyl-alpha-D-glucosamine: step 6/6. Its function is as follows. Transfers the gamma-phosphate of ATP to the 4'-position of a tetraacyldisaccharide 1-phosphate intermediate (termed DS-1-P) to form tetraacyldisaccharide 1,4'-bis-phosphate (lipid IVA). The sequence is that of Tetraacyldisaccharide 4'-kinase from Burkholderia thailandensis (strain ATCC 700388 / DSM 13276 / CCUG 48851 / CIP 106301 / E264).